Here is an 82-residue protein sequence, read N- to C-terminus: Photosystem I iron-sulfur center (82 aa).

2 consecutive 4Fe-4S ferredoxin-type domains span residues 2–31 (AHTVKIYDTCIGCTQCVRACPTDVLEMVPW) and 40–69 (IAAAPRTEDCVGCKRCETACPTDFLSIRVY). [4Fe-4S] cluster-binding residues include Cys-11, Cys-14, Cys-17, Cys-21, Cys-49, Cys-52, Cys-55, and Cys-59.

The cyanobacterial PSI reaction center is composed of one copy each of PsaA,B,C,D,E,F,I,J,K,L,M and X, and forms trimeric complexes. It depends on [4Fe-4S] cluster as a cofactor.

The protein resides in the cellular thylakoid membrane. The enzyme catalyses reduced [plastocyanin] + hnu + oxidized [2Fe-2S]-[ferredoxin] = oxidized [plastocyanin] + reduced [2Fe-2S]-[ferredoxin]. Apoprotein for the two 4Fe-4S centers FA and FB of photosystem I (PSI); essential for photochemical activity. FB is the terminal electron acceptor of PSI, donating electrons to ferredoxin. The C-terminus interacts with PsaA/B/D and helps assemble the protein into the PSI complex. Required for binding of PsaD and PsaE to PSI. PSI is a plastocyanin/cytochrome c6-ferredoxin oxidoreductase, converting photonic excitation into a charge separation, which transfers an electron from the donor P700 chlorophyll pair to the spectroscopically characterized acceptors A0, A1, FX, FA and FB in turn. The chain is Photosystem I iron-sulfur center from Synechococcus sp. (strain JA-3-3Ab) (Cyanobacteria bacterium Yellowstone A-Prime).